The primary structure comprises 500 residues: Cobyric acid synthase (500 aa).

Residues 251–449 (KLNIVIPIMP…LHGVFDHPDA (199 aa)) enclose the GATase cobBQ-type domain. The active-site Nucleophile is C332. Residue H441 is part of the active site.

It belongs to the CobB/CobQ family. CobQ subfamily.

It functions in the pathway cofactor biosynthesis; adenosylcobalamin biosynthesis. Functionally, catalyzes amidations at positions B, D, E, and G on adenosylcobyrinic A,C-diamide. NH(2) groups are provided by glutamine, and one molecule of ATP is hydrogenolyzed for each amidation. This is Cobyric acid synthase from Marinomonas sp. (strain MWYL1).